The chain runs to 383 residues: Interleukin-13 receptor subunit alpha-2 (383 aa).

The N-terminal stretch at 1–21 (MAFVHIRCLCFILLCTITGYS) is a signal peptide. Residues 22-334 (LEIKVNPPQD…WEGYTGPDSK (313 aa)) lie on the Extracellular side of the membrane. Fibronectin type-III domains lie at 28-128 (PPQD…SDEG), 131-219 (ETKI…PIRS), and 234-332 (PPEF…TGPD). A disulfide bridge links Cys-59 with Cys-107. Asn-109 carries N-linked (GlcNAc...) asparagine glycosylation. An intrachain disulfide couples Cys-139 to Cys-149. Asn-162 is a glycosylation site (N-linked (GlcNAc...) asparagine). A disulfide bridge connects residues Cys-178 and Cys-191. 2 N-linked (GlcNAc...) asparagine glycosylation sites follow: Asn-209 and Asn-293. Cys-263 and Cys-310 form a disulfide bridge. A WSXWS motif motif is present at residues 316–320 (WSEWS). A helical transmembrane segment spans residues 335-355 (IIFIVPVCLFFIFLLLLLCLI). Residues 356–383 (VEKEEPEPTLSLHVDLNKEVCAYEDTLC) are Cytoplasmic-facing.

Belongs to the type I cytokine receptor family. Type 5 subfamily. As to quaternary structure, interacts with IL4RA. Interacts with high affinity to interleukin-13 (IL13), but not to interleukin-4 (IL4). In terms of processing, cleaved by MMP8 leading to a soluble form that is also able to interact with IL13.

The protein localises to the cell membrane. Its subcellular location is the secreted. Functionally, cell surface receptor that plays a role in the regulation of IL-13-mediated responses. Functions as a decoy receptor that inhibits IL-13- and IL-4-mediated signal transduction via the JAK-STAT pathway and thereby modulates immune responses and inflammation. Serves as a functional signaling receptor for IL-13 in an alternative pathway involving AP-1 ultimately leading to the production of TGFB1. The chain is Interleukin-13 receptor subunit alpha-2 (Il13ra2) from Mus musculus (Mouse).